A 173-amino-acid polypeptide reads, in one-letter code: Glycine cleavage system H protein, mitochondrial (173 aa).

A mitochondrion-targeting transit peptide spans 1-48 (MALRAVRSVRAAVGGLRAISAPSAPCLPRPWGLRAGAVRELRTGPALL). The Lipoyl-binding domain occupies 66–148 (VGTVGISNFA…YEDGWLIKMT (83 aa)). An N6-lipoyllysine modification is found at Lys-107.

It belongs to the GcvH family. Interacts with GLDC. The glycine cleavage system is composed of four proteins: P (GLDC), T (GCST), L (DLD) and H (GCSH). The cofactor is (R)-lipoate.

The protein resides in the mitochondrion. In terms of biological role, the glycine cleavage system catalyzes the degradation of glycine. The H protein (GCSH) shuttles the methylamine group of glycine from the P protein (GLDC) to the T protein (GCST). Has a pivotal role in the lipoylation of enzymes involved in cellular energetics such as the mitochondrial dihydrolipoyllysine-residue acetyltransferase component of pyruvate dehydrogenase complex (DLAT), and the mitochondrial dihydrolipoyllysine-residue succinyltransferase component of 2-oxoglutarate dehydrogenase complex (DLST). This Bos taurus (Bovine) protein is Glycine cleavage system H protein, mitochondrial.